Reading from the N-terminus, the 342-residue chain is MTDAYQKAGVDVTAGYEVVARIQKKVGADNHNIGSFGGQYALEMAQYQKPVLVSSTDGVGTKLMVAFAADQHATIGIDCVAMCVNDIVAQGAQPLYFLDYLATGKTDPDKIEDIVAGVLEGCKQANMALIGGETAEMPGMYAAKHYDVAGFAVGIAEQDALVTGETIQAGDVLIGLASSGIHSNGYSLVRKIFFEQNNLTVASQLPELPGKTLGDWLLTPTKIYVEDLQPLLQQRVIKGAAHITGGGFIENVPRMLPADLAAHLTLGSWPILPIFKALQQYGQLAEMEMYNIFNMGIGMVLAVAPEAAPAVLAQLNAKQEQAYQIGTVQKRQQAAVELVTAK.

It belongs to the AIR synthase family.

The protein localises to the cytoplasm. It catalyses the reaction 2-formamido-N(1)-(5-O-phospho-beta-D-ribosyl)acetamidine + ATP = 5-amino-1-(5-phospho-beta-D-ribosyl)imidazole + ADP + phosphate + H(+). The protein operates within purine metabolism; IMP biosynthesis via de novo pathway; 5-amino-1-(5-phospho-D-ribosyl)imidazole from N(2)-formyl-N(1)-(5-phospho-D-ribosyl)glycinamide: step 2/2. The polypeptide is Phosphoribosylformylglycinamidine cyclo-ligase (Latilactobacillus sakei subsp. sakei (strain 23K) (Lactobacillus sakei subsp. sakei)).